The primary structure comprises 682 residues: Potassium-transporting ATPase ATP-binding subunit (682 aa).

A run of 4 helical transmembrane segments spans residues 34 to 54, 58 to 78, 219 to 239, and 254 to 274; these read PVMF…LAMV, IAGS…TVLF, IALT…TATL, and VLVA…LSAI. D307 acts as the 4-aspartylphosphate intermediate in catalysis. Residues D344, E348, 377-384, and K395 each bind ATP; that span reads FTAQSRMS. The Mg(2+) site is built by D518 and D522. 3 consecutive transmembrane segments (helical) span residues 588-608, 616-636, and 662-682; these read FAII…LNVM, AILS…PLAL, and LVVP…LGLA.

Belongs to the cation transport ATPase (P-type) (TC 3.A.3) family. Type IA subfamily. The system is composed of three essential subunits: KdpA, KdpB and KdpC.

It localises to the cell inner membrane. It carries out the reaction K(+)(out) + ATP + H2O = K(+)(in) + ADP + phosphate + H(+). In terms of biological role, part of the high-affinity ATP-driven potassium transport (or Kdp) system, which catalyzes the hydrolysis of ATP coupled with the electrogenic transport of potassium into the cytoplasm. This subunit is responsible for energy coupling to the transport system and for the release of the potassium ions to the cytoplasm. In Salmonella agona (strain SL483), this protein is Potassium-transporting ATPase ATP-binding subunit.